Here is a 169-residue protein sequence, read N- to C-terminus: Ribosome maturation factor RimM (169 aa).

The region spanning 95–168 is the PRC barrel domain; it reads PPDTAYIHDL…EMTIRRFDEF (74 aa).

It belongs to the RimM family. Binds ribosomal protein uS19.

The protein localises to the cytoplasm. In terms of biological role, an accessory protein needed during the final step in the assembly of 30S ribosomal subunit, possibly for assembly of the head region. Essential for efficient processing of 16S rRNA. May be needed both before and after RbfA during the maturation of 16S rRNA. It has affinity for free ribosomal 30S subunits but not for 70S ribosomes. The chain is Ribosome maturation factor RimM from Prosthecochloris aestuarii (strain DSM 271 / SK 413).